The sequence spans 652 residues: RNA-binding KH domain-containing protein RCF3 (652 aa).

The segment covering 1 to 14 (MERSRSKRNYHYDQ) has biased composition (basic and acidic residues). Residues 1-63 (MERSRSKRNY…NGRPSKSHPE (63 aa)) form a disordered region. The segment covering 34–55 (FGGGGGGNNRYRGGGGGGGGNG) has biased composition (gly residues). KH domains follow at residues 67-139 (TTTY…QEAL) and 175-245 (RVVT…LAIV). Residues 253-307 (QHRDRSNFQGRSHSPERSFAAAGDDYMPQLRRQSSDRFPRGNFRNNNFSSRQSNY) form a disordered region. Residues 292-306 (RGNFRNNNFSSRQSN) are compositionally biased toward low complexity. KH domains lie at 324 to 391 (ELVF…QEAL), 408 to 476 (LITT…LVEL), and 576 to 640 (RSTL…QSLL).

As to quaternary structure, homodimer. Interacts with CPL1. Interacts with RS40 and RS41. Interacts with DRB1/HYL1 and SE. Interacts with CPL2. As to expression, expressed in roots, cotyledons, leaves, flowers and siliques.

It is found in the nucleus. It localises to the nucleus speckle. Functionally, acts as a negative regulator of osmotic stress-induced gene expression. Involved in the regulation of thermotolerance responses under heat stress. Functions as an upstream regulator of heat stress transcription factor (HSF) genes. Negatively regulates HSFA1A, HSFA1B and HSFA1D, but positively controls the expression of HSFA1E, HSFA3, HSFA9, HSFB3, and DREB2C. Forms a complex with CPL1 that modulates co-transcriptional processes such as mRNA capping and polyadenylation, and functions to repress stress-inducible gene expression. Regulates pre-mRNA processing under salt stress. Involved in primary miRNA processing and pri-miRNA biogenesis. Binds both intronless and intron-containing pri-miRNAs. Acts as a regulator of biotic stress response gene expression and basal JA-mediated responses involved in defense. Acts as a negative regulator of resistance to the fungal pathogen Fusarium oxysporum. This Arabidopsis thaliana (Mouse-ear cress) protein is RNA-binding KH domain-containing protein RCF3.